The following is a 367-amino-acid chain: MEDPSNPQPNQSNLSQCPPLATAPTPAPVRGPYHRRAHSEVQFRLPEDLDLSEPFGGFDELGSEDDLFCSYMDIEKLGSGSGSASDSAGPSAPRSDNPFSAENGGAEAGNSRPRHRHSLSVDGSSTLESIEAKKAMAPDKLAELWVVDPKRAKRIIANRQSAARSKERKARYILELERKVQTLQTEATTLSAQLSLFQRDTTGLSSENTELKLRLQVMEQQAKLRDALNEQLKKEVERLKFATGEVSPADAYNLGMAHMQYQQQPQQSFFQHHHQQQTDAQNLQQMTHQFHLFQPNNNQNQSSRTNPPTAHQLMHHATSNAPAQSHSYSEAMHEDHLGRLQGLDISSCGRGSNFGRSDTVSESSSTM.

The tract at residues 1-57 (MEDPSNPQPNQSNLSQCPPLATAPTPAPVRGPYHRRAHSEVQFRLPEDLDLSEPFGG) is disordered. The segment covering 38 to 47 (HSEVQFRLPE) has biased composition (basic and acidic residues). The residue at position 70 (serine 70) is a Phosphoserine. Residues 79 to 124 (SGSGSASDSAGPSAPRSDNPFSAENGGAEAGNSRPRHRHSLSVDGS) are disordered. Residues 82–96 (GSASDSAGPSAPRSD) show a composition bias toward low complexity. The region spanning 148–211 (DPKRAKRIIA…TGLSSENTEL (64 aa)) is the bZIP domain. The basic motif stretch occupies residues 150 to 171 (KRAKRIIANRQSAARSKERKAR). Positions 166 to 245 (KERKARYILE…VERLKFATGE (80 aa)) form a coiled coil. The tract at residues 176–190 (LERKVQTLQTEATTL) is leucine-zipper. 3 stretches are compositionally biased toward polar residues: residues 294-309 (QPNN…NPPT), 317-328 (ATSNAPAQSHSY), and 354-367 (FGRS…SSTM). Disordered regions lie at residues 294–330 (QPNN…SYSE) and 343–367 (LDIS…SSTM).

Interacts with NEAP1. Forms homodimer and heterodimer with bZIP34 and bZIP61. In terms of tissue distribution, ubiquitous. Strongly expressed in mature pollen.

Its subcellular location is the nucleus. It is found in the nucleoplasm. The protein localises to the cytoplasm. The protein resides in the perinuclear region. In terms of biological role, transcription factor that may participate with bZIP34 in the gametophytic control of pollen development. This chain is bZIP transcription factor 18, found in Arabidopsis thaliana (Mouse-ear cress).